The primary structure comprises 561 residues: Tetracenomycin A2 monooxygenase-dioxygenase (561 aa).

4 residues coordinate FAD: L15, E35, Q128, and M152. Catalysis depends on Y231, which acts as the Proton acceptor. D322 provides a ligand contact to FAD.

This sequence belongs to the PheA/TfdB FAD monooxygenase family. Monomer. May form oligomers up to homohexamers. The cofactor is FAD.

It carries out the reaction tetracenomycin A2 + 2 NADPH + 2 O2 + 2 H(+) = tetracenomycin C + 2 NADP(+) + H2O. It participates in antibiotic biosynthesis; tetracenomycin C biosynthesis. Its function is as follows. Involved in the biosynthesis of tetracenomycin C (TCM C). Catalyzes the triple hydroxylation of tetracenomycin A2 (TCM A2) at positions C-4, C-4a and C-12a to give tetracenomycin C (TCM C). Can use either NADH or NADPH as electron donors, but prefers NADPH under physiological conditions. The protein is Tetracenomycin A2 monooxygenase-dioxygenase of Streptomyces glaucescens.